The following is a 392-amino-acid chain: Major outer membrane protein P.IA (392 aa).

Positions 1–19 (MRKKLTALVLSALPLAAVA) are cleaved as a signal peptide.

This sequence belongs to the Gram-negative porin family. In terms of assembly, homotrimer.

It localises to the cell outer membrane. Serves as a slightly cation selective porin. Major antigen on the gonococcal cell surface and it may have pathogenic properties in addition to its porin activity. The chain is Major outer membrane protein P.IA (porA) from Neisseria meningitidis serogroup B (strain ATCC BAA-335 / MC58).